We begin with the raw amino-acid sequence, 485 residues long: Adenosylhomocysteinase (485 aa).

Substrate contacts are provided by T60, D146, and E208. Position 209–211 (209–211) interacts with NAD(+); that stretch reads TTT. 2 residues coordinate substrate: K238 and D242. NAD(+)-binding positions include N243, 272-277, E295, N330, 351-353, and N399; these read GYGDVG and IGH.

This sequence belongs to the adenosylhomocysteinase family. NAD(+) serves as cofactor.

It is found in the cytoplasm. It catalyses the reaction S-adenosyl-L-homocysteine + H2O = L-homocysteine + adenosine. It functions in the pathway amino-acid biosynthesis; L-homocysteine biosynthesis; L-homocysteine from S-adenosyl-L-homocysteine: step 1/1. Functionally, may play a key role in the regulation of the intracellular concentration of adenosylhomocysteine. This is Adenosylhomocysteinase from Streptomyces coelicolor (strain ATCC BAA-471 / A3(2) / M145).